Reading from the N-terminus, the 249-residue chain is Undecaprenyl-diphosphatase (249 aa).

The next 8 membrane-spanning stretches (helical) occupy residues 11 to 31 (GLTE…TAIF), 35 to 55 (PDVG…VIFV), 74 to 94 (ITLS…GIFF), 101 to 121 (IFSE…FMLL), 135 to 155 (IPYL…LPGI), 175 to 195 (AVKY…VLEM), 208 to 228 (FIVA…MVIA), and 229 to 249 (GKLK…IFYI).

Belongs to the UppP family.

The protein resides in the cell membrane. The enzyme catalyses di-trans,octa-cis-undecaprenyl diphosphate + H2O = di-trans,octa-cis-undecaprenyl phosphate + phosphate + H(+). Its function is as follows. Catalyzes the dephosphorylation of undecaprenyl diphosphate (UPP). This Methanococcus vannielii (strain ATCC 35089 / DSM 1224 / JCM 13029 / OCM 148 / SB) protein is Undecaprenyl-diphosphatase.